The sequence spans 218 residues: Small ribosomal subunit protein uS5 (218 aa).

The disordered stretch occupies residues 1-45 (MPGRQRRDGGNGPAGQNSNGPEGRDNRRGGGDRRGGGDRRDNAAE). Residues 22-45 (EGRDNRRGGGDRRGGGDRRDNAAE) are compositionally biased toward basic and acidic residues. One can recognise an S5 DRBM domain in the interval 48 to 111 (QLERVVAINR…EEARKGFFRV (64 aa)).

The protein belongs to the universal ribosomal protein uS5 family. In terms of assembly, part of the 30S ribosomal subunit. Contacts proteins S4 and S8.

Functionally, with S4 and S12 plays an important role in translational accuracy. Its function is as follows. Located at the back of the 30S subunit body where it stabilizes the conformation of the head with respect to the body. The protein is Small ribosomal subunit protein uS5 of Nocardia farcinica (strain IFM 10152).